We begin with the raw amino-acid sequence, 293 residues long: Urease accessory protein UreD 2 (293 aa).

Belongs to the UreD family. In terms of assembly, ureD, UreF and UreG form a complex that acts as a GTP-hydrolysis-dependent molecular chaperone, activating the urease apoprotein by helping to assemble the nickel containing metallocenter of UreC. The UreE protein probably delivers the nickel.

It localises to the cytoplasm. In terms of biological role, required for maturation of urease via the functional incorporation of the urease nickel metallocenter. The polypeptide is Urease accessory protein UreD 2 (Streptomyces griseus subsp. griseus (strain JCM 4626 / CBS 651.72 / NBRC 13350 / KCC S-0626 / ISP 5235)).